The following is a 517-amino-acid chain: Putative succinate-semialdehyde dehydrogenase [NADP(+)] (517 aa).

NADP(+) contacts are provided by residues 157-158, 181-184, and 232-233; these read WN, KPDS, and GS. Glu-254 acts as the Proton acceptor in catalysis. Leu-255 lines the NADP(+) pocket. Catalysis depends on Cys-288, which acts as the Nucleophile. Glu-386 provides a ligand contact to NADP(+).

It belongs to the aldehyde dehydrogenase family.

The catalysed reaction is succinate semialdehyde + NADP(+) + H2O = succinate + NADPH + 2 H(+). Its function is as follows. Catalyzes the NADP(+)-dependent oxidation of succinate semialdehyde to succinate. Although it has succinate semialdehyde dehydrogenase activity, is likely to act physiologically on a different aldehyde(s). This Mycolicibacterium smegmatis (strain ATCC 700084 / mc(2)155) (Mycobacterium smegmatis) protein is Putative succinate-semialdehyde dehydrogenase [NADP(+)] (gabD2).